A 149-amino-acid chain; its full sequence is Arginine repressor (149 aa).

This sequence belongs to the ArgR family.

The protein localises to the cytoplasm. The protein operates within amino-acid biosynthesis; L-arginine biosynthesis [regulation]. Regulates arginine biosynthesis genes. The sequence is that of Arginine repressor from Bacillus mycoides (strain KBAB4) (Bacillus weihenstephanensis).